The sequence spans 313 residues: Pantothenate synthetase (313 aa).

43 to 50 (MGALHEGH) contributes to the ATP binding site. Histidine 50 serves as the catalytic Proton donor. Position 75 (glutamine 75) interacts with (R)-pantoate. Glutamine 75 contacts beta-alanine. 161–164 (GEKD) contacts ATP. Glutamine 167 serves as a coordination point for (R)-pantoate. Residues valine 190 and 198-201 (LSSR) contribute to the ATP site.

This sequence belongs to the pantothenate synthetase family. As to quaternary structure, homodimer.

It localises to the cytoplasm. The enzyme catalyses (R)-pantoate + beta-alanine + ATP = (R)-pantothenate + AMP + diphosphate + H(+). Its pathway is cofactor biosynthesis; (R)-pantothenate biosynthesis; (R)-pantothenate from (R)-pantoate and beta-alanine: step 1/1. Functionally, catalyzes the condensation of pantoate with beta-alanine in an ATP-dependent reaction via a pantoyl-adenylate intermediate. The chain is Pantothenate synthetase from Mycobacterium sp. (strain KMS).